The primary structure comprises 289 residues: RNA-binding protein CP29B, chloroplastic (289 aa).

A chloroplast-targeting transit peptide spans 1–62 (MAASASSLAL…NSPASRFARN (62 aa)). Phosphoserine occurs at positions 6 and 12. Valine 63 bears the N-acetylvaline mark. In terms of domain architecture, RRM 1 spans 91 to 169 (LKLFVGNLPF…RPLRVNAGPP (79 aa)). The tract at residues 158-199 (DGRPLRVNAGPPPPKREDGFSRGPRSSFGSSGSGYGGGGGSG) is disordered. The tract at residues 170–203 (PPKREDGFSRGPRSSFGSSGSGYGGGGGSGAGSG) is linker (Gly-rich). The segment covering 178-187 (SRGPRSSFGS) has biased composition (low complexity). Residues 188–199 (SGSGYGGGGGSG) show a composition bias toward gly residues. One can recognise an RRM 2 domain in the interval 204–282 (NRVYVGNLSW…RQIRVSEAEA (79 aa)).

ADP-ribosylated by the Pseudomonas syringae type III effector HopU1. ADP-ribosylation reduces the ability of the protein to bind RNA. In terms of processing, phosphorylated on tyrosine residues after treatment with abscisic acid (ABA). Phosphorylation may reduce the ability of the protein to bind RNA.

Its subcellular location is the plastid. The protein resides in the chloroplast. In terms of biological role, could be involved in splicing and/or processing of chloroplast RNA's. The sequence is that of RNA-binding protein CP29B, chloroplastic from Arabidopsis thaliana (Mouse-ear cress).